The primary structure comprises 480 residues: ATP synthase subunit beta (480 aa).

166–173 contacts ATP; that stretch reads GGAGVGKT.

This sequence belongs to the ATPase alpha/beta chains family. F-type ATPases have 2 components, CF(1) - the catalytic core - and CF(0) - the membrane proton channel. CF(1) has five subunits: alpha(3), beta(3), gamma(1), delta(1), epsilon(1). CF(0) has three main subunits: a(1), b(2) and c(9-12). The alpha and beta chains form an alternating ring which encloses part of the gamma chain. CF(1) is attached to CF(0) by a central stalk formed by the gamma and epsilon chains, while a peripheral stalk is formed by the delta and b chains.

The protein localises to the cell membrane. The enzyme catalyses ATP + H2O + 4 H(+)(in) = ADP + phosphate + 5 H(+)(out). Produces ATP from ADP in the presence of a proton gradient across the membrane. The catalytic sites are hosted primarily by the beta subunits. This chain is ATP synthase subunit beta, found in Streptomyces griseus subsp. griseus (strain JCM 4626 / CBS 651.72 / NBRC 13350 / KCC S-0626 / ISP 5235).